The following is a 922-amino-acid chain: Putative ATP-dependent helicase/translocase YwqA (922 aa).

The 164-residue stretch at leucine 462–glycine 625 folds into the Helicase ATP-binding domain. Aspartate 475 to threonine 482 serves as a coordination point for ATP. A DEAQ box motif is present at residues aspartate 576 to glutamine 579. Positions lysine 753–serine 907 constitute a Helicase C-terminal domain.

The protein belongs to the SNF2/RAD54 helicase family. In terms of assembly, interacts with the RNA polymerase core.

This Bacillus subtilis (strain 168) protein is Putative ATP-dependent helicase/translocase YwqA (ywqA).